A 108-amino-acid chain; its full sequence is FK506-binding protein 1 (108 aa).

One can recognise a PPIase FKBP-type domain in the interval 20–108 (GDSVTIHYVG…KFEVELLKIN (89 aa)).

This sequence belongs to the FKBP-type PPIase family. FKBP1 subfamily.

The protein resides in the cytoplasm. The catalysed reaction is [protein]-peptidylproline (omega=180) = [protein]-peptidylproline (omega=0). Its activity is regulated as follows. Inhibited by both FK506 and rapamycin. Functionally, PPIases accelerate the folding of proteins. It catalyzes the cis-trans isomerization of proline imidic peptide bonds in oligopeptides. This Cryptococcus neoformans var. neoformans serotype D (strain JEC21 / ATCC MYA-565) (Filobasidiella neoformans) protein is FK506-binding protein 1 (FPR1).